The primary structure comprises 1115 residues: MTTPVSLSQVEKKTIESILTNKKEEGKLITKVTILNEKKKKLEIKTLILSSNRIFLFTDSKGKLSAEHHYLEITEIASQSENDVTIKFKNQNVMKMNLDASEVLKTLYGTLMSTFPGIKIGKTIIFNITPASRIPSIFQATSFKDIQGCGSFNLTYRSVCDHLGVQPLSSILWDIENLYPFNQVREFNLAEIYQYSFTDLKAILLSLSYNTYFQSFQSNGKLSNEDLNLLAEVFKENSSLQQLTITNSQASKEPIITLLQNVAENKALHLSHINLNNNSLENKGILTLGSSIQTFSNGLTYLNIENTSCSGKGLEAMFGCLTANNVVCGSMTHLNISNNKLESYGTNGLCKFLSKATALQQLLMSNTSPVYSFLKTSSSSIQTLDFSGNKSTTTKESVIDILSFFKQMSHLQTVNLSRIQTTPDDLKLLFSPATSLLKCSSVDLSENDLGDGGIIKLCEIMYPNSNLHHLSIDGNFKTKSKLRARAIEALINLIDDNTSIESLSLASGSGKYQLKGDLMPLLLSLLKNQSLVKLDISGNGVGDSGALAVSKILWKNQTLKSLKCDGNDFSYTALKMIKCSIRRNEKSLTILQLPLSDISTILKNDSNGSSHEKILKTIQDIQTSIVINYPNNIHPIDTSSGGLTPTKQPSIGSLAGVIKKPPIGPPSTPTKSSNPGFQTLPKRPTRGPLYPGRATGGAVTLTDKAQINASTIELPPLVSRSIDLLMEQGISSVGIFRTCASATALKKIKTRFEAGEDIDLKAENVDVDTVAGVLKSYFRELPNPIFPENLHEYFFQAMRQSSNEEIIQSLKDIIDQLSPLECKMIKKLFHLLHLISLEKDVNMMSPENIAICWAPTFFRSFASELLPINSFMIVNYFDIFDPENKPISSDNSGDADTDSTQSTCTTNNNNLVATSLSSPISPSTTPTKSIDNVLHTTVEVSRSPNHERAHTVGPMTSKRPISNNNGVSSNTPPLPNNVTPHHNTMPSRPSASPIKRPPSMGGSLSNFAGIPLSNHSSSGQLNNNNSNNNTTSNSSNSSSGKSSSNPSPIPTPPDSPSMSYIGDGKSTLRSKRFSRVNRVSYSPVLPRAWTNESRTVSSLFQDDLDSNSDSSGPSL.

The tract at residues 661–691 (PPIGPPSTPTKSSNPGFQTLPKRPTRGPLYP) is disordered. The 182-residue stretch at 699–880 (VTLTDKAQIN…FMIVNYFDIF (182 aa)) folds into the Rho-GAP domain. Disordered regions lie at residues 888–1065 (SSDN…GDGK) and 1092–1115 (ESRTVSSLFQDDLDSNSDSSGPSL). Residues 898 to 929 (DSTQSTCTTNNNNLVATSLSSPISPSTTPTKS) show a composition bias toward low complexity. Polar residues-rich tracts occupy residues 934–943 (LHTTVEVSRS) and 959–990 (RPISNNNGVSSNTPPLPNNVTPHHNTMPSRPS). Residues 1013–1046 (SNHSSSGQLNNNNSNNNTTSNSSNSSSGKSSSNP) show a composition bias toward low complexity.

The protein localises to the cytoplasm. Its function is as follows. Rho GTPase-activating protein involved in the signal transduction pathway. The sequence is that of Rho GTPase-activating protein gacW (gacW) from Dictyostelium discoideum (Social amoeba).